The primary structure comprises 153 residues: Ribosome maturation factor RimP (153 aa).

The protein belongs to the RimP family.

It is found in the cytoplasm. In terms of biological role, required for maturation of 30S ribosomal subunits. This is Ribosome maturation factor RimP from Actinobacillus pleuropneumoniae serotype 5b (strain L20).